Consider the following 238-residue polypeptide: CD63 antigen (238 aa).

The Cytoplasmic segment spans residues 1 to 11 (MAVEGGMKCVK). The helical transmembrane segment at 12–32 (FLLYVLLLAFCACAVGLIAVG) threads the bilayer. Over 33–51 (VGAQLVLSQTITHGATPGS) the chain is Extracellular. The helical transmembrane segment at 52 to 72 (LLPVVIIAVGAFLFLVAFVGC) threads the bilayer. The Cytoplasmic segment spans residues 73 to 81 (CGTCKENYC). A helical transmembrane segment spans residues 82-102 (LMITFAIFLSLIMLVEVAAAI). At 103–203 (AGYVFRDKVM…KIGLWLRKNV (101 aa)) the chain is on the extracellular side. N-linked (GlcNAc...) asparagine glycans are attached at residues asparagine 125, asparagine 130, asparagine 150, and asparagine 172. Residues 204–224 (LVVAAAALGIAFVEVLGIVFA) traverse the membrane as a helical segment. The Cytoplasmic portion of the chain corresponds to 225-238 (CCLVKSIRSGYEVM). The short motif at 234 to 238 (GYEVM) is the Lysosomal targeting motif element.

This sequence belongs to the tetraspanin (TM4SF) family. As to quaternary structure, interacts with TIMP1 and ITGB1 and recruits TIMP1 to ITGB1. Interacts with CD9. Identified in a complex with CD9 and ITGB3. Interacts with PMEL. Interacts with KDR/VEGFR2; identified in a complex with ITGB1 and KDR/VEGFR2 and is required to recruit KDR to ITGB1 complexes. Interacts with SYT7. In terms of processing, palmitoylated at a low, basal level in unstimulated platelets. The level of palmitoylation increases when platelets are activated by thrombin (in vitro).

It is found in the cell membrane. It localises to the lysosome membrane. The protein resides in the late endosome membrane. The protein localises to the endosome. Its subcellular location is the multivesicular body. It is found in the melanosome. It localises to the secreted. The protein resides in the extracellular exosome. The protein localises to the cell surface. In terms of biological role, functions as a cell surface receptor for TIMP1 and plays a role in the activation of cellular signaling cascades. Plays a role in the activation of ITGB1 and integrin signaling, leading to the activation of AKT, FAK/PTK2 and MAP kinases. Promotes cell survival, reorganization of the actin cytoskeleton, cell adhesion, spreading and migration, via its role in the activation of AKT and FAK/PTK2. Plays a role in VEGFA signaling via its role in regulating the internalization of KDR/VEGFR2. Plays a role in intracellular vesicular transport processes, and is required for normal trafficking of the PMEL luminal domain that is essential for the development and maturation of melanocytes. Plays a role in the adhesion of leukocytes onto endothelial cells via its role in the regulation of SELP trafficking. May play a role in mast cell degranulation in response to Ms4a2/FceRI stimulation, but not in mast cell degranulation in response to other stimuli. In Oryctolagus cuniculus (Rabbit), this protein is CD63 antigen (CD63).